We begin with the raw amino-acid sequence, 406 residues long: Putative colanic acid biosynthesis glycosyltransferase WcaL (406 aa).

It belongs to the glycosyltransferase group 1 family. Glycosyltransferase 4 subfamily.

Its pathway is slime biogenesis; slime polysaccharide biosynthesis. This Escherichia coli (strain K12) protein is Putative colanic acid biosynthesis glycosyltransferase WcaL (wcaL).